The sequence spans 591 residues: Frizzled and smoothened-like protein F (591 aa).

The N-terminal stretch at 1–17 is a signal peptide; the sequence is MKILIIFIIFIISYISG. Residues 18–244 are Extracellular-facing; that stretch reads FEIPKGFGIG…KWDQLLTMSK (227 aa). Residues 30–177 enclose the FZ domain; it reads IPDAECLNYI…GTFAVPCSDP (148 aa). Disulfide bonds link cysteine 35–cysteine 105, cysteine 48–cysteine 98, and cysteine 123–cysteine 174. N-linked (GlcNAc...) asparagine glycosylation is found at asparagine 167, asparagine 187, asparagine 202, and asparagine 230. A helical membrane pass occupies residues 245–265; sequence ILSTISFILSLYNVLTFGIIN. The Cytoplasmic portion of the chain corresponds to 266–275; the sequence is KKVSDPHKCT. Residues 276–296 form a helical membrane-spanning segment; it reads CFFSGSIALVNLCDIITYGIG. The Extracellular portion of the chain corresponds to 297-321; it reads YEELLCPEPGRSAKQQLDPVCGLTG. The chain crosses the membrane as a helical span at residues 322–342; the sequence is AFFHLGITYCVLWSMTMGLVL. Topologically, residues 343–353 are cytoplasmic; it reads YCSVKRQKWFK. Residues 354–374 traverse the membrane as a helical segment; it reads FNYFLIGNTTFTITTVVIAAA. The Extracellular portion of the chain corresponds to 375–397; the sequence is TSKFEAGLGSIECWIRDRWYAIS. Residues 398 to 418 traverse the membrane as a helical segment; it reads LFWIPCGIALLIGSFCIIAVI. Residues 419 to 442 are Cytoplasmic-facing; that stretch reads HEVYKTSKKSISNRNDLLQRELKP. The helical transmembrane segment at 443-463 threads the bilayer; sequence LLIVIFISGSFLYLFIFFFDI. Residues 464–495 are Extracellular-facing; it reads ERKFGGYRSAVEDYVLCLLNGSQEECFTTGPS. N-linked (GlcNAc...) asparagine glycosylation is present at asparagine 483. A helical membrane pass occupies residues 496–516; that stretch reads YVPYFLFYLVIRWFGIIFFLF. Topologically, residues 517–591 are cytoplasmic; that stretch reads YGTSNIARKI…AVELESIKIN (75 aa). Positions 538–571 are enriched in low complexity; that stretch reads SSISPKSTPKSSPKNSDSKINSNSTNNNNMILND. The tract at residues 538-573 is disordered; that stretch reads SSISPKSTPKSSPKNSDSKINSNSTNNNNMILNDNN.

It belongs to the G-protein coupled receptor Fz/Smo family.

It localises to the membrane. The chain is Frizzled and smoothened-like protein F (fslF) from Dictyostelium discoideum (Social amoeba).